The primary structure comprises 491 residues: 3-epi-6-deoxocathasterone 23-monooxygenase CYP90D1 (491 aa).

Residues 7-27 form a helical membrane-spanning segment; that stretch reads LLFFSFFFFIIIVIFNKINGL. Cys442 lines the heme pocket.

The protein belongs to the cytochrome P450 family. Requires heme as cofactor. In terms of tissue distribution, expressed in leaf vascular tissue.

Its subcellular location is the endoplasmic reticulum membrane. It catalyses the reaction 3-epi-6-deoxocathasterone + reduced [NADPH--hemoprotein reductase] + O2 = 6-deoxotyphasterol + oxidized [NADPH--hemoprotein reductase] + H2O + H(+). The catalysed reaction is (22S,24R)-22-hydroxy-5alpha-ergostan-3-one + reduced [NADPH--hemoprotein reductase] + O2 = 3-dehydro-6-deoxoteasterone + oxidized [NADPH--hemoprotein reductase] + H2O + H(+). Its pathway is plant hormone biosynthesis; brassinosteroid biosynthesis. In terms of biological role, involved in brassinosteroid (BR) biosynthesis. May convert teasterone (TE) to 3-dehydroteasterone (3DT, 3-DHT), or 6-deoxoteasterone (6-deoxoTE) to 3-dehydro-6-deoxoteasterone (6-deoxo3DT, 6-deoxo3DHT). C-23 hydroxylase that converts directly (22S,24R)-22-hydroxy-5-alpha-ergostan-3-one and 3-epi-6-deoxocathasterone to 3-dehydro-6-deoxoteasterone (6-deoxo3DT, 6-deoxo3DHT) and 6-deoxotyphasterol (6-deoxoTY), respectively. These C-23 hydroxylation shortcuts bypass campestanol, 6-deoxocathasterone, and 6-deoxoteasterone (6-deoxoTE). Also catalyzes the conversion of cathasterone to teasterone (TE), 6-deoxotyphasterol (6-deoxoTY) to 6-deoxocathasterone (6-deoxoCT), (22S,24R)-22-hydroxyergost-4-en-3-one (22-OH-4-en-3-one) to (22R,23R)-22,23-dihydroxy-campest-4-en-3-one (22,23-diOH-4-en-3-one) and (22S)-22-hydroxycampesterol (22-OHCR) to (22R,23R)-22,23-dihydroxycampesterol (22,23-diOHCR). This Arabidopsis thaliana (Mouse-ear cress) protein is 3-epi-6-deoxocathasterone 23-monooxygenase CYP90D1.